The primary structure comprises 202 residues: Recoverin (202 aa).

The N-myristoyl glycine moiety is linked to residue Gly2. Cysteine sulfenic acid (-SOH) is present on Cys39. 4 EF-hand domains span residues 41-59 (SGRITRQEFESIYSKFFPD), 61-96 (DPKAYAQHVFRSFDANSDGTLDFKEYVIALHMTTAG), 97-132 (KPTQKLEWAFSLYDVDGNGTISKNEVLEIVMAIFKM), and 147-182 (TPEKRAEKIWAFFGKKEDDKLTEEEFIEGTLANKEI). Positions 74, 76, 78, 80, 85, 110, 112, 114, 116, and 121 each coordinate Ca(2+). The interaction with GRK1 stretch occupies residues 189–192 (EPQK).

The protein belongs to the recoverin family. As to quaternary structure, homodimer; disulfide-linked. Homodimerization is caused by prolonged intense illumination. May form a complex composed of RHO, GRK1 and RCVRN in a Ca(2+)-dependent manner; RCVRN prevents the interaction between GRK1 and RHO. Interacts (via C-terminus) with GRK1 (via N-terminus); the interaction is Ca(2+)-dependent. In terms of processing, the N-terminal glycine is linked to one of four different types of acyl groups. The most abundant is myristoleate (14:1), but 14:0, 14:2, and 12:0 acyl residues are also present. The Ca(2+) induced exposure of the myristoyl group, known as the calcium-myristoyl switch, promotes RCVRN binding to the photoreceptor cell membranes only when intracellular Ca(2+) concentration is high. Post-translationally, oxidation on Cys-39 occurs in response to prolonged intense illumination and results in the formation of disulfide homodimers, and to a lesser extent disulfide-linked heterodimers. As to expression, expressed in rod photoreceptors in the retina (at protein level).

The protein localises to the photoreceptor inner segment. It is found in the cell projection. Its subcellular location is the cilium. It localises to the photoreceptor outer segment. The protein resides in the photoreceptor outer segment membrane. The protein localises to the perikaryon. In terms of biological role, acts as a calcium sensor and regulates phototransduction of cone and rod photoreceptor cells. Modulates light sensitivity of cone photoreceptor in dark and dim conditions. In response to high Ca(2+) levels induced by low light levels, prolongs RHO/rhodopsin activation in rod photoreceptor cells by binding to and inhibiting GRK1-mediated phosphorylation of RHO/rhodopsin. Plays a role in scotopic vision/enhances vision in dim light by enhancing signal transfer between rod photoreceptors and rod bipolar cells. Improves rod photoreceptor sensitivity in dim light and mediates response of rod photoreceptors to facilitate detection of change and motion in bright light. The polypeptide is Recoverin (Rcvrn) (Mus musculus (Mouse)).